Here is a 406-residue protein sequence, read N- to C-terminus: Peptidase T (406 aa).

A Zn(2+)-binding site is contributed by His81. Residue Asp83 is part of the active site. Position 142 (Asp142) interacts with Zn(2+). Glu176 serves as the catalytic Proton acceptor. Residues Glu177, Asp199, and His381 each contribute to the Zn(2+) site.

Belongs to the peptidase M20B family. It depends on Zn(2+) as a cofactor.

It localises to the cytoplasm. The catalysed reaction is Release of the N-terminal residue from a tripeptide.. Its function is as follows. Cleaves the N-terminal amino acid of tripeptides. The sequence is that of Peptidase T from Streptococcus pneumoniae serotype 2 (strain D39 / NCTC 7466).